The primary structure comprises 1402 residues: DNA-directed RNA polymerase subunit beta' (1402 aa).

The Zn(2+) site is built by Cys71, Cys73, Cys86, and Cys89. Mg(2+) contacts are provided by Asp462, Asp464, and Asp466. 4 residues coordinate Zn(2+): Cys808, Cys881, Cys888, and Cys891.

It belongs to the RNA polymerase beta' chain family. As to quaternary structure, the RNAP catalytic core consists of 2 alpha, 1 beta, 1 beta' and 1 omega subunit. When a sigma factor is associated with the core the holoenzyme is formed, which can initiate transcription. Mg(2+) is required as a cofactor. It depends on Zn(2+) as a cofactor.

It catalyses the reaction RNA(n) + a ribonucleoside 5'-triphosphate = RNA(n+1) + diphosphate. In terms of biological role, DNA-dependent RNA polymerase catalyzes the transcription of DNA into RNA using the four ribonucleoside triphosphates as substrates. This chain is DNA-directed RNA polymerase subunit beta', found in Hyphomonas neptunium (strain ATCC 15444).